Consider the following 1842-residue polypeptide: Fatty acid synthase alpha subunit pigJ (1842 aa).

Residues 120-184 (GAPVEEEGSK…TPAGGSTTPD (65 aa)) form a disordered region. Residues 140–175 (SGSSRTATTAKATVTTPSSSSPETAPPAASTPSQGT) show a composition bias toward low complexity. The 79-residue stretch at 184–262 (DIPLSAKHVV…DALQGNFPGK (79 aa)) folds into the Carrier domain. An O-(pantetheine 4'-phosphoryl)serine modification is found at serine 222. Positions 611–807 (GKTVLVTGAG…CGAAIGWVRG (197 aa)) are beta-ketoacyl reductase. The Ketosynthase family 3 (KS3) domain maps to 1058–1585 (KEFLQEIVVE…QKGGIAVVVA (528 aa)). Active-site for beta-ketoacyl synthase activity residues include cysteine 1244, histidine 1470, and histidine 1511. The segment at 1649–1672 (KARVGGHPENNNNNNNNSSSKRNT) is disordered. The span at 1658-1668 (NNNNNNNNSSS) shows a compositional bias: low complexity. Residues aspartate 1725, valine 1726, and glutamate 1727 each coordinate Mg(2+). Residues 1725-1727 (DVE), serine 1761, 1770-1780 (EAVFKSLQTPS), and 1823-1825 (ITH) contribute to the acetyl-CoA site. Threonine 1824 and histidine 1825 together coordinate Mg(2+).

Belongs to the thiolase-like superfamily. Fungal fatty acid synthetase subunit alpha family. [Alpha(6)beta(6)] hexamers of two multifunctional subunits (alpha and beta).

The enzyme catalyses acetyl-CoA + n malonyl-CoA + 2n NADPH + 4n H(+) = a long-chain-acyl-CoA + n CoA + n CO2 + 2n NADP(+).. It carries out the reaction a fatty acyl-[ACP] + malonyl-[ACP] + H(+) = a 3-oxoacyl-[ACP] + holo-[ACP] + CO2. The catalysed reaction is a (3R)-hydroxyacyl-[ACP] + NADP(+) = a 3-oxoacyl-[ACP] + NADPH + H(+). Its pathway is secondary metabolite biosynthesis. Functionally, fatty acid synthase alpha subunit; part of the gene cluster that mediates the biosynthesis of azaphilone pigments (MonAzPs), a complex mixture of compounds with a common azaphilone skeleton very widely used as food colorants. PigJ and pigK form the two subunits of a dedicated fungal fatty acid synthase (FAS) that produces the side chain fatty acyl moiety of MonAzPs, a beta-keto fatty acid. The chain length control of the pigJ-pigK FAS is somewhat flexible as MonAzPs features either a beta-ketooctanoic or a beta-ketodecanoic acid moiety. The beta-ketoacyl-ACP probably serves as the substrate for the acetyltransferase pigD that directly transfers the fatty acyl chain to the C-4 alcohol of the pyran ring. The first step of the pathway is performed by the nrPKS pigA that forms the hexaketide precursor from successive condensations of five malonyl-CoA units, with a simple acetyl-CoA starter unit. The role of esterase pigG is not clear, but it may play at most a supplementary role in the formation of the benzaldehyde produced by the pigA nrPKS. This very reactive benzaldehyde is intercepted by the pigC ketoreductase that to provide the first stable enzyme-free MonAzPs intermediate, 6-(4-hydroxy-2-oxopentyl)-3-methyl-2,4-dioxocyclohexane carbaldehyde, also known as M7PKS-1. The FAD-dependent monooxygenase pigN hydroxylates M7PKS-1 at C-4, which triggers the formation of the pyran ring. PigJ, pigK and pigD are involved in the acetylation of the pyran ring. PigJ and pigK form the two subunits of a dedicated fungal FAS that produces the side chain fatty acyl moiety of MonAzPs and pigD transfers the fatty acyl chain to the C-4 alcohol. PigM and pigO are involved in the elimination of the omega-1 alcohol. PigM acts as an O-acetyltransferase that synthesizes the putative O-11 acetyl intermediate whereas pigO eliminates acetic acid to yield an intermediate with a C10(11) double bond. The dehydration of the C-11 alcohol followed by the reduction of the C6(7) double bond by the NAD(P)H-dependent oxidoreductase pigE increases the electrophilicity of the C-5 ketone of the resulting acyl benzopyran. This in turn sets up the C-5 ketone for an intramolecular Knoevenagel aldol condensation with the C-20 enol of the side chain. This condensation affords the characteristic linear tricyclic carbon skeletons of the yellow pigments that serve as the common precursors for the classical yellow pigments monascin and ankaflavin, orange pigments rubopunctatin and monascorubrin, and red pigments ribropunctamine and monascorubramine. The FAD-dependent oxidoreductase pigF is especially invoved in the biosynthesis of orange and red pigments via desaturation of C6(7). This Monascus ruber (Mold) protein is Fatty acid synthase alpha subunit pigJ.